Consider the following 254-residue polypeptide: Sensory rhodopsin (254 aa).

At 1–4 the chain is on the extracellular side; that stretch reads MTGA. Residues 5 to 26 traverse the membrane as a helical segment; sequence VTSAYWLAAVAFLIGVGITAAL. Over 27-35 the chain is Cytoplasmic; sequence YAKLEGSRA. A helical transmembrane segment spans residues 36–57; the sequence is RTRLAALAVIPGFAGLSYVGMA. The Extracellular segment spans residues 58 to 71; it reads LGIGTVTVNGAELV. The chain crosses the membrane as a helical span at residues 72–93; sequence GLRYVDWVVTTPLLVGFIGYNA. The Cytoplasmic portion of the chain corresponds to 94–96; that stretch reads GAS. The chain crosses the membrane as a helical span at residues 97 to 119; the sequence is RRAIAGVMIADALMIVFGAAAVV. Residues 120–123 are Extracellular-facing; that stretch reads SGGT. Residues 124 to 151 form a helical membrane-spanning segment; sequence LKWALFGVSALFHVSLFAYLYVIFPGGI. Topologically, residues 152–154 are cytoplasmic; sequence PDD. A helical membrane pass occupies residues 155-182; it reads PMQRGLFSLLKNHVGLLWLAYPFVWLMG. Topologically, residues 183-190 are extracellular; it reads PAGIGFTG. The chain crosses the membrane as a helical span at residues 191–223; sequence AVGAALTYAFLDVLAKVPYVYFFYARRQAFIDV. Residue K206 is modified to N6-(retinylidene)lysine. Residues 224–254 lie on the Cytoplasmic side of the membrane; it reads TDSRAAAKGDGPAVGGEAPVATGDDAPTAAD. Positions 231–254 are disordered; it reads KGDGPAVGGEAPVATGDDAPTAAD.

Belongs to the archaeal/bacterial/fungal opsin family.

Its subcellular location is the cell membrane. In terms of biological role, involved in the control of phototaxis. This chain is Sensory rhodopsin (sop), found in Halorubrum sodomense.